An 844-amino-acid chain; its full sequence is Translation elongation factor 2 (844 aa).

The tr-type G domain occupies 17–348 (RNIRNMSVIA…MIAIHLPSPV (332 aa)). 26–33 (AHVDHGKS) provides a ligand contact to GTP. 2 positions are modified to phosphothreonine: threonine 57 and threonine 59. Residues 162 to 165 (NKMD) and 219 to 221 (SGL) contribute to the GTP site. Serine 488 is subject to Phosphoserine. The residue at position 701 (histidine 701) is a Diphthamide.

It belongs to the TRAFAC class translation factor GTPase superfamily. Classic translation factor GTPase family. EF-G/EF-2 subfamily. In terms of processing, phosphorylation by EF-2 kinase completely inactivates EF-2.

The protein localises to the cytoplasm. The catalysed reaction is GTP + H2O = GDP + phosphate + H(+). Functionally, catalyzes the GTP-dependent ribosomal translocation step during translation elongation. During this step, the ribosome changes from the pre-translocational (PRE) to the post-translocational (POST) state as the newly formed A-site-bound peptidyl-tRNA and P-site-bound deacylated tRNA move to the P and E sites, respectively. Catalyzes the coordinated movement of the two tRNA molecules, the mRNA and conformational changes in the ribosome. The polypeptide is Translation elongation factor 2 (Bombyx mori (Silk moth)).